A 564-amino-acid polypeptide reads, in one-letter code: Ferric reductase transmembrane component 1 (564 aa).

The N-linked (GlcNAc...) asparagine glycan is linked to Asn4. Helical transmembrane passes span 10-30 (TVIA…MFWL) and 73-93 (VILT…FIGM). N-linked (GlcNAc...) asparagine glycosylation is present at Asn111. A helical transmembrane segment spans residues 117–137 (VAARLGFLACGLYVTSYFFSI). One can recognise a Ferric oxidoreductase domain in the interval 121-254 (LGFLACGLYV…VYMKVCVAVY (134 aa)). Heme-binding residues include His157 and His171. Transmembrane regions (helical) follow at residues 160–180 (LSQY…GLAA) and 193–213 (IIGY…LPFF). His225 and His239 together coordinate heme. Residues 255–410 (VFDRGCRMLR…DGPYGPVSNP (156 aa)) form the FAD-binding FR-type domain. Asn268 carries N-linked (GlcNAc...) asparagine glycosylation. Residue 317–323 (HPFTIAS) participates in FAD binding. Asn360 carries N-linked (GlcNAc...) asparagine glycosylation. Phosphoserine occurs at positions 362, 381, and 383. A helical transmembrane segment spans residues 417–437 (LFLFAGGVGVSYILPIILDTI). Position 419–427 (419–427 (LFAGGVGVS)) interacts with NAD(+). Asn501 carries an N-linked (GlcNAc...) asparagine glycan.

It belongs to the ferric reductase (FRE) family. Requires FAD as cofactor. It depends on heme as a cofactor.

It is found in the cell membrane. The catalysed reaction is 2 a Fe(II)-siderophore + NADP(+) + H(+) = 2 a Fe(III)-siderophore + NADPH. In terms of biological role, metalloreductase responsible for reducing extracellular iron and copper prior to import. Catalyzes the reductive uptake of Fe(3+)-salts and Fe(3+) bound to catecholate or hydroxamate siderophores. Fe(3+) is reduced to Fe(2+), which then dissociates from the siderophore and can be imported by the high-affinity Fe(2+) transport complex in the plasma membrane. Also participates in Cu(2+) reduction and Cu(+) uptake. The protein is Ferric reductase transmembrane component 1 (frp1) of Schizosaccharomyces pombe (strain 972 / ATCC 24843) (Fission yeast).